The following is a 156-amino-acid chain: Small ribosomal subunit protein uS7 (156 aa).

This sequence belongs to the universal ribosomal protein uS7 family. In terms of assembly, part of the 30S ribosomal subunit. Contacts proteins S9 and S11.

Its function is as follows. One of the primary rRNA binding proteins, it binds directly to 16S rRNA where it nucleates assembly of the head domain of the 30S subunit. Is located at the subunit interface close to the decoding center, probably blocks exit of the E-site tRNA. The sequence is that of Small ribosomal subunit protein uS7 from Buchnera aphidicola subsp. Acyrthosiphon pisum (strain Tuc7).